The chain runs to 260 residues: Flavin-dependent thymidylate synthase (260 aa).

The ThyX domain occupies 1-202; that stretch reads MKIKLVSYSK…PRLFKYAGPN (202 aa). Residues S55, 79-81, and Q87 each bind FAD; that span reads RHR. DUMP contacts are provided by residues 76–79, 87–91, and R141; these read QLVR and QMSHR. Positions 79 to 89 match the ThyX motif motif; that stretch reads RHRIASYTQMS. Residues 157–159 and N163 contribute to the FAD site; that span reads NAR. R168 is a dUMP binding site. Residue R168 is the Involved in ionization of N3 of dUMP, leading to its activation of the active site.

Belongs to the thymidylate synthase ThyX family. In terms of assembly, homotetramer. Requires FAD as cofactor.

The catalysed reaction is dUMP + (6R)-5,10-methylene-5,6,7,8-tetrahydrofolate + NADPH + H(+) = dTMP + (6S)-5,6,7,8-tetrahydrofolate + NADP(+). It participates in pyrimidine metabolism; dTTP biosynthesis. In terms of biological role, catalyzes the reductive methylation of 2'-deoxyuridine-5'-monophosphate (dUMP) to 2'-deoxythymidine-5'-monophosphate (dTMP) while utilizing 5,10-methylenetetrahydrofolate (mTHF) as the methyl donor, and NADPH and FADH(2) as the reductant. The chain is Flavin-dependent thymidylate synthase from Sulfolobus acidocaldarius (strain ATCC 33909 / DSM 639 / JCM 8929 / NBRC 15157 / NCIMB 11770).